We begin with the raw amino-acid sequence, 545 residues long: Chaperonin GroEL (545 aa).

ATP-binding positions include 30–33 (TLGP), Lys-51, 87–91 (DGTTT), Gly-415, 479–481 (NAA), and Asp-495. The disordered stretch occupies residues 526–545 (KEDKPDLGGAGGMGGMGGMM). Positions 533-545 (GGAGGMGGMGGMM) are enriched in gly residues.

The protein belongs to the chaperonin (HSP60) family. In terms of assembly, forms a cylinder of 14 subunits composed of two heptameric rings stacked back-to-back. Interacts with the co-chaperonin GroES.

The protein localises to the cytoplasm. It carries out the reaction ATP + H2O + a folded polypeptide = ADP + phosphate + an unfolded polypeptide.. In terms of biological role, together with its co-chaperonin GroES, plays an essential role in assisting protein folding. The GroEL-GroES system forms a nano-cage that allows encapsulation of the non-native substrate proteins and provides a physical environment optimized to promote and accelerate protein folding. The protein is Chaperonin GroEL of Sodalis glossinidius.